Reading from the N-terminus, the 188-residue chain is Methylated-DNA--protein-cysteine methyltransferase (188 aa).

DNA contacts are provided by Tyr120, Gly121, and Arg134. Catalysis depends on Cys151, which acts as the Nucleophile; methyl group acceptor. Residue Ser157 participates in DNA binding.

The protein belongs to the MGMT family.

The protein resides in the nucleus. The catalysed reaction is a 6-O-methyl-2'-deoxyguanosine in DNA + L-cysteinyl-[protein] = S-methyl-L-cysteinyl-[protein] + a 2'-deoxyguanosine in DNA. It catalyses the reaction a 4-O-methyl-thymidine in DNA + L-cysteinyl-[protein] = a thymidine in DNA + S-methyl-L-cysteinyl-[protein]. Its function is as follows. Involved in the cellular defense against the biological effects of O6-methylguanine (O6-MeG) and O4-methylthymine (O4-MeT) in DNA. Repairs the methylated nucleobase in DNA by stoichiometrically transferring the methyl group to a cysteine residue in the enzyme. This is a suicide reaction: the enzyme is irreversibly inactivated. Prefers double-stranded DNA over single-stranded DNA as substrate. The polypeptide is Methylated-DNA--protein-cysteine methyltransferase (MGT1) (Saccharomyces cerevisiae (strain YJM789) (Baker's yeast)).